Here is a 539-residue protein sequence, read N- to C-terminus: Chaperonin GroEL 2 (539 aa).

ATP contacts are provided by residues 30–33, Lys51, 87–91, Gly415, 480–482, and Asp496; these read TLGP, DGTTT, and NAA.

This sequence belongs to the chaperonin (HSP60) family. As to quaternary structure, forms a cylinder of 14 subunits composed of two heptameric rings stacked back-to-back. Interacts with the co-chaperonin GroES.

It localises to the cytoplasm. The catalysed reaction is ATP + H2O + a folded polypeptide = ADP + phosphate + an unfolded polypeptide.. Together with its co-chaperonin GroES, plays an essential role in assisting protein folding. The GroEL-GroES system forms a nano-cage that allows encapsulation of the non-native substrate proteins and provides a physical environment optimized to promote and accelerate protein folding. The sequence is that of Chaperonin GroEL 2 from Sphingopyxis alaskensis (strain DSM 13593 / LMG 18877 / RB2256) (Sphingomonas alaskensis).